Consider the following 490-residue polypeptide: Cytochrome P450 71B28 (490 aa).

A helical membrane pass occupies residues methionine 1–leucine 21. Cysteine 440 lines the heme pocket.

Belongs to the cytochrome P450 family. It depends on heme as a cofactor.

The protein resides in the membrane. This chain is Cytochrome P450 71B28 (CYP71B28), found in Arabidopsis thaliana (Mouse-ear cress).